A 397-amino-acid polypeptide reads, in one-letter code: Argininosuccinate synthase (397 aa).

9–17 is a binding site for ATP; it reads AYSGGLDTT. L-citrulline is bound at residue Y87. Residue G117 participates in ATP binding. Residues T119, N123, and D124 each contribute to the L-aspartate site. N123 contributes to the L-citrulline binding site. R127, S174, S183, E259, and Y271 together coordinate L-citrulline.

Belongs to the argininosuccinate synthase family. Type 1 subfamily. As to quaternary structure, homotetramer.

The protein localises to the cytoplasm. The catalysed reaction is L-citrulline + L-aspartate + ATP = 2-(N(omega)-L-arginino)succinate + AMP + diphosphate + H(+). The protein operates within amino-acid biosynthesis; L-arginine biosynthesis; L-arginine from L-ornithine and carbamoyl phosphate: step 2/3. The chain is Argininosuccinate synthase from Pyrobaculum aerophilum (strain ATCC 51768 / DSM 7523 / JCM 9630 / CIP 104966 / NBRC 100827 / IM2).